A 755-amino-acid polypeptide reads, in one-letter code: Xaa-Pro dipeptidyl-peptidase (755 aa).

Residues serine 348, aspartate 468, and histidine 498 each act as charge relay system in the active site.

The protein belongs to the peptidase S15 family. As to quaternary structure, homodimer.

The protein resides in the cytoplasm. It catalyses the reaction Hydrolyzes Xaa-Pro-|- bonds to release unblocked, N-terminal dipeptides from substrates including Ala-Pro-|-p-nitroanilide and (sequentially) Tyr-Pro-|-Phe-Pro-|-Gly-Pro-|-Ile.. Its function is as follows. Removes N-terminal dipeptides sequentially from polypeptides having unsubstituted N-termini provided that the penultimate residue is proline. This Streptococcus thermophilus (strain CNRZ 1066) protein is Xaa-Pro dipeptidyl-peptidase.